A 256-amino-acid chain; its full sequence is MSNFDNFNTDFYQTSYSIDDQSQGYNYNAGGAQHSKQYAYDPYSQQGGFIPPEMMNQQQPYTGQIYQPTQTYTPAATDSVYGSTFDDEPPLLEELGINFDHIWQKTLTVLHPLKVADGNIMNETDLAGPMVFCLAFGATLLLAGKIQFGYVYGISAIGCLGMYCLLNLMSMTGVSFGCVSSVLGYCLLPMIILSSFAVIFSLQGILGIVLAALIIGWCSFSASKIFISALAMDGQQVLVAYPCALLYGVFALISVF.

Topologically, residues 1-125 (MSNFDNFNTD…ADGNIMNETD (125 aa)) are cytoplasmic. Residues 126–146 (LAGPMVFCLAFGATLLLAGKI) form a helical membrane-spanning segment. Q147 is a topological domain (lumenal). The chain crosses the membrane as a helical span at residues 148–168 (FGYVYGISAIGCLGMYCLLNL). Over 169–172 (MSMT) the chain is Cytoplasmic. Residues 173 to 193 (GVSFGCVSSVLGYCLLPMIIL) form a helical membrane-spanning segment. Residues 194 to 195 (SS) are Lumenal-facing. A helical membrane pass occupies residues 196 to 216 (FAVIFSLQGILGIVLAALIIG). The Cytoplasmic portion of the chain corresponds to 217–235 (WCSFSASKIFISALAMDGQ). The helical transmembrane segment at 236-256 (QVLVAYPCALLYGVFALISVF) threads the bilayer.

It belongs to the YIP1 family.

It is found in the endoplasmic reticulum membrane. The protein localises to the golgi apparatus. It localises to the cis-Golgi network membrane. Its function is as follows. Plays a role in transport between endoplasmic reticulum and Golgi. In Xenopus tropicalis (Western clawed frog), this protein is Protein YIPF5 (yipf5).